Consider the following 167-residue polypeptide: Peptidoglycan-binding-like protein (167 aa).

A signal peptide spans 1 to 24 (MRSPKVKFLTIFTLSILITKMSFA).

It belongs to the IagB/IpgF/P19 family.

The protein localises to the periplasm. This is Peptidoglycan-binding-like protein (pbl) from Escherichia coli O157:H7.